Reading from the N-terminus, the 104-residue chain is Fluoride-specific ion channel FluC 2 (104 aa).

The next 3 membrane-spanning stretches (helical) occupy residues 22–42 (IGPY…LAAV), 48–68 (LVMA…STLA), and 82–102 (MLLG…WCGL). Positions 59 and 62 each coordinate Na(+).

It belongs to the fluoride channel Fluc/FEX (TC 1.A.43) family.

It is found in the cell membrane. The catalysed reaction is fluoride(in) = fluoride(out). Its activity is regulated as follows. Na(+) is not transported, but it plays an essential structural role and its presence is essential for fluoride channel function. Fluoride-specific ion channel. Important for reducing fluoride concentration in the cell, thus reducing its toxicity. The protein is Fluoride-specific ion channel FluC 2 of Corynebacterium diphtheriae (strain ATCC 700971 / NCTC 13129 / Biotype gravis).